Reading from the N-terminus, the 547-residue chain is ATP synthase subunit alpha (547 aa).

Residue 172–179 (GDRKTGKT) coordinates ATP.

It belongs to the ATPase alpha/beta chains family. In terms of assembly, F-type ATPases have 2 components, CF(1) - the catalytic core - and CF(0) - the membrane proton channel. CF(1) has five subunits: alpha(3), beta(3), gamma(1), delta(1), epsilon(1). CF(0) has three main subunits: a(1), b(2) and c(9-12). The alpha and beta chains form an alternating ring which encloses part of the gamma chain. CF(1) is attached to CF(0) by a central stalk formed by the gamma and epsilon chains, while a peripheral stalk is formed by the delta and b chains.

It localises to the cell membrane. It carries out the reaction ATP + H2O + 4 H(+)(in) = ADP + phosphate + 5 H(+)(out). Its function is as follows. Produces ATP from ADP in the presence of a proton gradient across the membrane. The alpha chain is a regulatory subunit. The sequence is that of ATP synthase subunit alpha from Rhodococcus opacus (strain B4).